The chain runs to 155 residues: Protein-export protein SecB (155 aa).

This sequence belongs to the SecB family. As to quaternary structure, homotetramer, a dimer of dimers. One homotetramer interacts with 1 SecA dimer.

The protein resides in the cytoplasm. In terms of biological role, one of the proteins required for the normal export of preproteins out of the cell cytoplasm. It is a molecular chaperone that binds to a subset of precursor proteins, maintaining them in a translocation-competent state. It also specifically binds to its receptor SecA. This is Protein-export protein SecB from Enterobacter sp. (strain 638).